Here is a 295-residue protein sequence, read N- to C-terminus: Small ribosomal subunit protein uS2 (295 aa).

Position 2 is an N-acetylserine (serine 2). The residue at position 43 (serine 43) is a Phosphoserine. Position 52 is an N6-acetyllysine (lysine 52). Residues 54 to 113 (TWEKLLLAARAIVAIENPADVSVISSRNTGQRAVLKFAAATGATPIAGRFTPGTFTNQIQ) form an interaction with PPP1R16B region. N6-acetyllysine; alternate is present on lysine 89. A Glycyl lysine isopeptide (Lys-Gly) (interchain with G-Cter in SUMO2); alternate cross-link involves residue lysine 89. Threonine 97 carries the post-translational modification Phosphothreonine. Laminin-binding regions lie at residues 161–180 (IPCNNKGAHSVGLMWWMLAR) and 205–229 (RDPEEIEKEEQAAAEKAVTKEEFQG). [DE]-W-[ST] repeat units follow at residues 230 to 232 (EWT), 247 to 249 (DWS), 266 to 268 (DWS), 275 to 277 (DWS), and 293 to 295 (EWS). A laminin-binding region spans residues 242–295 (QPEVADWSEGVQVPSVPIQQFPTEDWSAQPATEDWSAAPTAQATEWVGATTEWS). The interval 266 to 295 (DWSAQPATEDWSAAPTAQATEWVGATTEWS) is disordered.

Belongs to the universal ribosomal protein uS2 family. Monomer (37LRP) and homodimer (67LR). Component of the small ribosomal subunit. Mature ribosomes consist of a small (40S) and a large (60S) subunit. The 40S subunit contains about 33 different proteins and 1 molecule of RNA (18S). The 60S subunit contains about 49 different proteins and 3 molecules of RNA (28S, 5.8S and 5S). Interacts with RPS21. Interacts with several laminins including at least LAMB1. Interacts with MDK. Interacts with PRNP. The mature dimeric form interacts with PPP1R16B (via its fourth ankyrin repeat). Interacts with PPP1CA only in the presence of PPP1R16B. Post-translationally, acylated. Acylation may be a prerequisite for conversion of the monomeric 37 kDa laminin receptor precursor (37LRP) to the mature dimeric 67 kDa laminin receptor (67LR), and may provide a mechanism for membrane association. Cleaved by stromelysin-3 (ST3) at the cell surface. Cleavage by stromelysin-3 may be a mechanism to alter cell-extracellular matrix interactions.

Its subcellular location is the cell membrane. It is found in the cytoplasm. The protein resides in the nucleus. Its function is as follows. Required for the assembly and/or stability of the 40S ribosomal subunit. Required for the processing of the 20S rRNA-precursor to mature 18S rRNA in a late step of the maturation of 40S ribosomal subunits. Also functions as a cell surface receptor for laminin. Plays a role in cell adhesion to the basement membrane and in the consequent activation of signaling transduction pathways. May play a role in cell fate determination and tissue morphogenesis. Also acts as a receptor for several other ligands, including the pathogenic prion protein, viruses, and bacteria. Acts as a PPP1R16B-dependent substrate of PPP1CA. Enables malignant tumor cells to penetrate laminin tissue and vessel barriers. Activates precursor thymic anti-OFA/iLRP specific cytotoxic T-cell. May induce CD8 T-suppressor cells secreting IL-10. This Mus musculus (Mouse) protein is Small ribosomal subunit protein uS2 (Rpsa).